The following is a 295-amino-acid chain: 4-hydroxy-tetrahydrodipicolinate synthase (295 aa).

A pyruvate-binding site is contributed by Thr46. Tyr134 serves as the catalytic Proton donor/acceptor. The Schiff-base intermediate with substrate role is filled by Lys162. Ile205 lines the pyruvate pocket.

The protein belongs to the DapA family. In terms of assembly, homotetramer; dimer of dimers.

It localises to the cytoplasm. The enzyme catalyses L-aspartate 4-semialdehyde + pyruvate = (2S,4S)-4-hydroxy-2,3,4,5-tetrahydrodipicolinate + H2O + H(+). It functions in the pathway amino-acid biosynthesis; L-lysine biosynthesis via DAP pathway; (S)-tetrahydrodipicolinate from L-aspartate: step 3/4. Its function is as follows. Catalyzes the condensation of (S)-aspartate-beta-semialdehyde [(S)-ASA] and pyruvate to 4-hydroxy-tetrahydrodipicolinate (HTPA). The chain is 4-hydroxy-tetrahydrodipicolinate synthase from Anaeromyxobacter dehalogenans (strain 2CP-1 / ATCC BAA-258).